Consider the following 493-residue polypeptide: Chaperone SurA (493 aa).

An N-terminal signal peptide occupies residues 1 to 33; sequence MKRQAFSLLSRLNPWQQLLLSAVLVTLAAPAAA. The tract at residues 46-76 is disordered; that stretch reads FTQQGSQSASQGSTVAPSQPMMGVPQPSSQP. A compositionally biased stretch (low complexity) spans 48-58; the sequence is QQGSQSASQGS. PpiC domains lie at 230 to 332 and 346 to 444; these read PTEF…KLVS and IAQT…QVEN.

Its subcellular location is the periplasm. The catalysed reaction is [protein]-peptidylproline (omega=180) = [protein]-peptidylproline (omega=0). Its function is as follows. Chaperone involved in the correct folding and assembly of outer membrane proteins. Recognizes specific patterns of aromatic residues and the orientation of their side chains, which are found more frequently in integral outer membrane proteins. May act in both early periplasmic and late outer membrane-associated steps of protein maturation. The polypeptide is Chaperone SurA (Cupriavidus metallidurans (strain ATCC 43123 / DSM 2839 / NBRC 102507 / CH34) (Ralstonia metallidurans)).